The chain runs to 385 residues: MDIRIKEKPEEFYVKEIKKLDLKEKGQYAYFLLKKKDMTTLDAVRHISHRFGIPLKNIGFAGLKDKKAVTEQYISVKDLNEEKIRKMDGYRTENLELKFLGFSDKGLELGEIEGNYFEVVVRGVTKYHRRVFPRMKELVENYGCENYFGEQRFGSVKHAEEFIVKYLLRHEYEEAMKEYLTSLGDKRLKRLLRKAWRDWDRFLSLMPKGAKPELEVVKALRRGESFKNAFMVLPKNIRLMFVFAYQSYLWNRYLYTFVVRYLKYCKTPFLKWELAFFNDMSEVIWEEIKDLEIPYLGVEYKPRNKKAEIVMKEVLQDEGITPKMLMAERIGIKLFSDGVRKAFFKPQGLKVIEERKNSLKLSFTLPPGSYATILLRKLFCSDVKS.

Asp65 acts as the Nucleophile in catalysis. In terms of domain architecture, TRUD spans 143 to 345 (GCENYFGEQR…SDGVRKAFFK (203 aa)).

It belongs to the pseudouridine synthase TruD family.

The enzyme catalyses uridine(13) in tRNA = pseudouridine(13) in tRNA. Functionally, responsible for synthesis of pseudouridine from uracil-13 in transfer RNAs. This Aquifex aeolicus (strain VF5) protein is tRNA pseudouridine synthase D.